Here is a 468-residue protein sequence, read N- to C-terminus: Probable Xaa-Pro aminopeptidase PEPP (468 aa).

Positions 264, 275, 398, and 438 each coordinate Mn(2+).

The protein belongs to the peptidase M24B family. Mn(2+) is required as a cofactor.

The catalysed reaction is Release of any N-terminal amino acid, including proline, that is linked to proline, even from a dipeptide or tripeptide.. Its function is as follows. Catalyzes the removal of a penultimate prolyl residue from the N-termini of peptides. The chain is Probable Xaa-Pro aminopeptidase PEPP (PEPP) from Paracoccidioides brasiliensis (strain Pb18).